Reading from the N-terminus, the 577-residue chain is Arginine--tRNA ligase (577 aa).

Residues 122–132 (PNVAKEMHVGH) carry the 'HIGH' region motif.

It belongs to the class-I aminoacyl-tRNA synthetase family. As to quaternary structure, monomer.

The protein resides in the cytoplasm. It catalyses the reaction tRNA(Arg) + L-arginine + ATP = L-arginyl-tRNA(Arg) + AMP + diphosphate. This Salmonella enteritidis PT4 (strain P125109) protein is Arginine--tRNA ligase.